The following is a 405-amino-acid chain: Accessory Sec system protein translocase subunit SecY2 (405 aa).

10 helical membrane-spanning segments follow: residues leucine 14–valine 34, leucine 63–phenylalanine 83, methionine 104–valine 124, isoleucine 131–leucine 151, alanine 156–proline 176, glycine 191–tyrosine 211, methionine 247–phenylalanine 267, proline 285–valine 305, phenylalanine 343–leucine 363, and leucine 368–isoleucine 388.

This sequence belongs to the SecY/SEC61-alpha family. SecY2 subfamily. As to quaternary structure, component of the accessory SecA2/SecY2 protein translocase complex required to export cell wall proteins. May form heterotrimers with SecE and SecG subunits.

It is found in the cell membrane. In terms of biological role, part of the accessory SecA2/SecY2 system specifically required for export of possible cell wall proteins. The central subunit of a protein translocation channel. This Streptococcus pneumoniae (strain CGSP14) protein is Accessory Sec system protein translocase subunit SecY2.